The primary structure comprises 142 residues: Large ribosomal subunit protein uL13 (142 aa).

The protein belongs to the universal ribosomal protein uL13 family. Part of the 50S ribosomal subunit.

This protein is one of the early assembly proteins of the 50S ribosomal subunit, although it is not seen to bind rRNA by itself. It is important during the early stages of 50S assembly. The polypeptide is Large ribosomal subunit protein uL13 (Citrobacter koseri (strain ATCC BAA-895 / CDC 4225-83 / SGSC4696)).